A 134-amino-acid chain; its full sequence is Arsenate reductase 2 (134 aa).

Active-site nucleophile residues include cysteine 11, cysteine 83, and cysteine 90. 2 disulfide bridges follow: cysteine 11/cysteine 83 and cysteine 83/cysteine 90.

This sequence belongs to the low molecular weight phosphotyrosine protein phosphatase family. Thioredoxin-coupled ArsC subfamily.

It is found in the cytoplasm. It catalyses the reaction arsenate + [thioredoxin]-dithiol + H(+) = arsenite + [thioredoxin]-disulfide + H2O. Catalyzes the reduction of arsenate [As(V)] to arsenite [As(III)]. The protein is Arsenate reductase 2 of Bacillus cereus (strain ATCC 10987 / NRS 248).